The sequence spans 112 residues: UPF0145 protein LAF_1635 (112 aa).

This sequence belongs to the UPF0145 family.

This is UPF0145 protein LAF_1635 from Limosilactobacillus fermentum (strain NBRC 3956 / LMG 18251) (Lactobacillus fermentum).